We begin with the raw amino-acid sequence, 117 residues long: Large ribosomal subunit protein bL20c (117 aa).

The protein belongs to the bacterial ribosomal protein bL20 family.

It is found in the plastid. The protein localises to the chloroplast. In terms of biological role, binds directly to 23S ribosomal RNA and is necessary for the in vitro assembly process of the 50S ribosomal subunit. It is not involved in the protein synthesizing functions of that subunit. The chain is Large ribosomal subunit protein bL20c from Manihot esculenta (Cassava).